A 501-amino-acid polypeptide reads, in one-letter code: Rhazimal synthase (501 aa).

The helical transmembrane segment at 4–24 (MQLSFASAVVYSLIFFVFLLV) threads the bilayer. Asn282 carries an N-linked (GlcNAc...) asparagine glycan. Heme is bound at residue Cys442.

It belongs to the cytochrome P450 family. The cofactor is heme.

It localises to the membrane. It catalyses the reaction (19E)-geissoschizine + reduced [NADPH--hemoprotein reductase] + O2 = rhazimal + oxidized [NADPH--hemoprotein reductase] + 2 H2O + H(+). It carries out the reaction (19E)-geissoschizine + reduced [NADPH--hemoprotein reductase] + O2 = akuammicine + formate + oxidized [NADPH--hemoprotein reductase] + H2O + H(+). Its pathway is alkaloid biosynthesis. In terms of biological role, a cytochrome P450 monooxygenase involved in the biosynthesis of akuammilan monoterpene indole alkaloids (MIAs) natural products, components with various biological properties such as antidiabetic, antibacterial, anti-inflammatory, anticancer, and antimalarial activities. Catalyzes the conversion of geissoschizine to rhazimal. Can also, with lower efficiency, support the conversion of geissoschizine to akuammicine. The chain is Rhazimal synthase from Alstonia scholaris (Dogbane).